The sequence spans 182 residues: MYSFILDCTTRTAKKVKMHVIDIYNKYHELLVFCRQQLIQKNFEMSKSNAVELYSKRQDEIHDEYQKRKRREIKVIKSDLIELRRQKDEVIENMKTFKHDVVKYKKLYEDLEQEIKILERKNKNLEIETNSDSGNLMVYIANIENILSKCTNKSLKRNIEKQLYKMDEIAYKLKDNFREEFE.

Positions 66-133 (QKRKRREIKV…NLEIETNSDS (68 aa)) form a coiled coil.

This is an uncharacterized protein from Acanthamoeba polyphaga (Amoeba).